A 156-amino-acid polypeptide reads, in one-letter code: Small ribosomal subunit protein uS7cz/uS7cy (156 aa).

The protein belongs to the universal ribosomal protein uS7 family. As to quaternary structure, part of the 30S ribosomal subunit.

Its subcellular location is the plastid. It localises to the chloroplast. Its function is as follows. One of the primary rRNA binding proteins, it binds directly to 16S rRNA where it nucleates assembly of the head domain of the 30S subunit. The protein is Small ribosomal subunit protein uS7cz/uS7cy (rps7-A) of Triticum aestivum (Wheat).